The primary structure comprises 483 residues: Regulatory protein ViaA (483 aa).

This sequence belongs to the ViaA family. Homodimer. Interacts with RavA.

The protein resides in the cytoplasm. In terms of biological role, component of the RavA-ViaA chaperone complex, which may act on the membrane to optimize the function of some of the respiratory chains. ViaA stimulates the ATPase activity of RavA. This Salmonella paratyphi A (strain ATCC 9150 / SARB42) protein is Regulatory protein ViaA.